A 221-amino-acid polypeptide reads, in one-letter code: 5-methylthioribulose-1-phosphate/5-deoxyribulose-1-phosphate aldolase (221 aa).

Glu-75 (proton donor/acceptor) is an active-site residue. Co(2+) is bound by residues Glu-75, His-94, His-96, and His-157.

It belongs to the aldolase class II family. The cofactor is Co(2+).

It carries out the reaction 5-(methylsulfanyl)-D-ribulose 1-phosphate = 2-(methylsulfanyl)acetaldehyde + dihydroxyacetone phosphate. The catalysed reaction is 5-deoxy-D-ribulose 1-phosphate = dihydroxyacetone phosphate + acetaldehyde. Its pathway is amino-acid biosynthesis; L-methionine biosynthesis via salvage pathway. In terms of biological role, uses 5-methylthioribulose-1-phosphate to yield 2-(methylthio)acetaldehyde and dihydroxyacetone phosphate. Can also use 5-deoxyribulose 1-phosphate to yield acetaldehyde and dihydroxyacetone phosphate. Part of a bifunctional DHAP-shunt salvage pathway for SAM by-products. The protein is 5-methylthioribulose-1-phosphate/5-deoxyribulose-1-phosphate aldolase of Rhodospirillum rubrum (strain ATCC 11170 / ATH 1.1.1 / DSM 467 / LMG 4362 / NCIMB 8255 / S1).